The sequence spans 118 residues: Large ribosomal subunit protein bL20 (118 aa).

Belongs to the bacterial ribosomal protein bL20 family.

Functionally, binds directly to 23S ribosomal RNA and is necessary for the in vitro assembly process of the 50S ribosomal subunit. It is not involved in the protein synthesizing functions of that subunit. This is Large ribosomal subunit protein bL20 from Gluconobacter oxydans (strain 621H) (Gluconobacter suboxydans).